The primary structure comprises 198 residues: Segregation and condensation protein B (198 aa).

Positions 169 to 198 are disordered; that stretch reads LADPAAEEPDQNEMDLFFDRFNQSKEQEEE.

It belongs to the ScpB family. As to quaternary structure, homodimer. Homodimerization may be required to stabilize the binding of ScpA to the Smc head domains. Component of a cohesin-like complex composed of ScpA, ScpB and the Smc homodimer, in which ScpA and ScpB bind to the head domain of Smc. The presence of the three proteins is required for the association of the complex with DNA.

The protein localises to the cytoplasm. In terms of biological role, participates in chromosomal partition during cell division. May act via the formation of a condensin-like complex containing Smc and ScpA that pull DNA away from mid-cell into both cell halves. This Listeria monocytogenes serotype 4a (strain HCC23) protein is Segregation and condensation protein B.